The primary structure comprises 244 residues: DNA repair protein RecO (244 aa).

This sequence belongs to the RecO family.

Involved in DNA repair and RecF pathway recombination. The polypeptide is DNA repair protein RecO (Caldicellulosiruptor bescii (strain ATCC BAA-1888 / DSM 6725 / KCTC 15123 / Z-1320) (Anaerocellum thermophilum)).